The chain runs to 216 residues: Lipoprotein-releasing system ATP-binding protein LolD (216 aa).

The region spanning 2-216 is the ABC transporter domain; it reads IHLEGITKSF…TIHMVDGNII (215 aa). 34–41 contacts ATP; that stretch reads GPSGAGKT.

It belongs to the ABC transporter superfamily. Lipoprotein translocase (TC 3.A.1.125) family. The complex is composed of two ATP-binding proteins (LolD) and two transmembrane proteins (LolC and LolE).

It is found in the cell inner membrane. In terms of biological role, part of the ABC transporter complex LolCDE involved in the translocation of mature outer membrane-directed lipoproteins, from the inner membrane to the periplasmic chaperone, LolA. Responsible for the formation of the LolA-lipoprotein complex in an ATP-dependent manner. The sequence is that of Lipoprotein-releasing system ATP-binding protein LolD from Bacteroides fragilis (strain YCH46).